Here is a 120-residue protein sequence, read N- to C-terminus: Large ribosomal subunit protein uL22 (120 aa).

Residues 1 to 25 are disordered; that stretch reads MFVNKKYTAKGKNLPSSPKKVRPIA.

It belongs to the universal ribosomal protein uL22 family. Part of the 50S ribosomal subunit.

Functionally, this protein binds specifically to 23S rRNA; its binding is stimulated by other ribosomal proteins, e.g. L4, L17, and L20. It is important during the early stages of 50S assembly. It makes multiple contacts with different domains of the 23S rRNA in the assembled 50S subunit and ribosome. The globular domain of the protein is located near the polypeptide exit tunnel on the outside of the subunit, while an extended beta-hairpin is found that lines the wall of the exit tunnel in the center of the 70S ribosome. This is Large ribosomal subunit protein uL22 from Borrelia recurrentis (strain A1).